Here is a 184-residue protein sequence, read N- to C-terminus: Probable DNA-directed RNA polymerase subunit delta (184 aa).

Residues 14–81 enclose the HTH HARE-type domain; it reads LSMIEVARAI…GENVWALRSW (68 aa). 2 disordered regions span residues 88–107 and 118–184; these read DEEVNHPEDEEEDDSRKHHK and GDDD…DEDD. Residues 118-164 are compositionally biased toward acidic residues; the sequence is GDDDIIDYDNDDPEDDDLDAATDDSDDDYSDDDSDYDEDNDDADDVL.

This sequence belongs to the RpoE family. As to quaternary structure, RNAP is composed of a core of 2 alpha, a beta and a beta' subunits. The core is associated with a delta subunit and one of several sigma factors.

In terms of biological role, participates in both the initiation and recycling phases of transcription. In the presence of the delta subunit, RNAP displays an increased specificity of transcription, a decreased affinity for nucleic acids, and an increased efficiency of RNA synthesis because of enhanced recycling. The sequence is that of Probable DNA-directed RNA polymerase subunit delta from Lactobacillus acidophilus (strain ATCC 700396 / NCK56 / N2 / NCFM).